The following is a 360-amino-acid chain: Outer membrane protein P2 (360 aa).

The first 20 residues, 1-20 (MKKTLAALIVGAFAASAANA), serve as a signal peptide directing secretion.

This sequence belongs to the Gram-negative porin family. In terms of assembly, homotrimer.

Its subcellular location is the cell outer membrane. Its function is as follows. Forms pores that allow passive diffusion of small molecules across the outer membrane. This chain is Outer membrane protein P2 (ompP2), found in Haemophilus influenzae.